Here is a 1001-residue protein sequence, read N- to C-terminus: E3 ubiquitin-protein ligase BRE1B (1001 aa).

The interval 1 to 40 is disordered; that stretch reads MSGLSNKRAAGDGGSGPPEKKMNREEKTTTTLIEPIRLGG. Over residues 18–28 the composition is skewed to basic and acidic residues; sequence PEKKMNREEKT. Residue Lys20 is modified to N6-acetyllysine. Position 42 is a phosphoserine (Ser42). Residues 55–91 are a coiled coil; that stretch reads KNKKLAERLEQRQACEDELRERIEKLEKRQATDDATL. The interval 122–142 is disordered; that stretch reads TEVPGCQEGLTRDVIPRPDPG. Coiled coils occupy residues 189–377 and 437–525; these read KAAV…LRSL and LQKK…ASGS. N6-acetyllysine is present on residues Lys355 and Lys517. The tract at residues 519-647 is disordered; the sequence is RAQASGSSHC…KAKVEEAKRK (129 aa). Over residues 565 to 576 the composition is skewed to low complexity; that stretch reads ALLAGATSATSS. Glycyl lysine isopeptide (Lys-Gly) (interchain with G-Cter in SUMO2) cross-links involve residues Lys578 and Lys579. Residues Ser584 and Ser585 each carry the phosphoserine modification. Composition is skewed to basic and acidic residues over residues 602-619 and 633-647; these read RGREPEARPKRELREREG and RADREKAKVEEAKRK. Residues 627–946 adopt a coiled-coil conformation; that stretch reads AASTLSRADR…EEIKEYKARL (320 aa). An RING-type zinc finger spans residues 948–987; sequence CPCCNTRKKDAVLTKCFHVFCFECVRGRYEARQRKCPKCN.

This sequence belongs to the BRE1 family. As to quaternary structure, component of the RNF20/40 complex (also known as BRE1 complex) probably composed of 2 copies of RNF20/BRE1A and 2 copies of RNF40/BRE1B. Interacts with UBE2E1/UBCH6. Interacts with RB1 and WAC.

The protein localises to the nucleus. The catalysed reaction is S-ubiquitinyl-[E2 ubiquitin-conjugating enzyme]-L-cysteine + [acceptor protein]-L-lysine = [E2 ubiquitin-conjugating enzyme]-L-cysteine + N(6)-ubiquitinyl-[acceptor protein]-L-lysine.. It participates in protein modification; protein ubiquitination. In terms of biological role, component of the RNF20/40 E3 ubiquitin-protein ligase complex that mediates monoubiquitination of 'Lys-120' of histone H2B (H2BK120ub1). H2BK120ub1 gives a specific tag for epigenetic transcriptional activation and is also prerequisite for histone H3 'Lys-4' and 'Lys-79' methylation (H3K4me and H3K79me, respectively). It thereby plays a central role in histone code and gene regulation. The RNF20/40 complex forms a H2B ubiquitin ligase complex in cooperation with the E2 enzyme UBE2A or UBE2B; reports about the cooperation with UBE2E1/UBCH are contradictory. Required for transcriptional activation of Hox genes. This is E3 ubiquitin-protein ligase BRE1B (Rnf40) from Mus musculus (Mouse).